Here is a 252-residue protein sequence, read N- to C-terminus: Gastrula zinc finger protein XlCGF28.1 (252 aa).

C2H2-type zinc fingers lie at residues 6 to 28, 34 to 56, 62 to 84, 90 to 112, 118 to 140, 146 to 168, 174 to 196, 202 to 224, and 230 to 252; these read FTCN…LRSH, FTCS…FRGH, SACT…IRSH, YTCT…VRSH, FKCT…LRFH, TTCS…FRVH, FTCT…SYLH, YTCT…SYLH, and FTCT…SHTH.

It belongs to the krueppel C2H2-type zinc-finger protein family.

The protein localises to the nucleus. May be involved in transcriptional regulation. The protein is Gastrula zinc finger protein XlCGF28.1 of Xenopus laevis (African clawed frog).